The chain runs to 484 residues: Ribosomal protein uS12 methylthiotransferase RimO (484 aa).

The MTTase N-terminal domain occupies arginine 8–alanine 119. The [4Fe-4S] cluster site is built by cysteine 17, cysteine 53, cysteine 82, cysteine 184, cysteine 188, and cysteine 191. A Radical SAM core domain is found at leucine 170 to arginine 401. In terms of domain architecture, TRAM spans glutamate 403–glycine 469.

The protein belongs to the methylthiotransferase family. RimO subfamily. Requires [4Fe-4S] cluster as cofactor.

The protein resides in the cytoplasm. It catalyses the reaction L-aspartate(89)-[ribosomal protein uS12]-hydrogen + (sulfur carrier)-SH + AH2 + 2 S-adenosyl-L-methionine = 3-methylsulfanyl-L-aspartate(89)-[ribosomal protein uS12]-hydrogen + (sulfur carrier)-H + 5'-deoxyadenosine + L-methionine + A + S-adenosyl-L-homocysteine + 2 H(+). In terms of biological role, catalyzes the methylthiolation of an aspartic acid residue of ribosomal protein uS12. This is Ribosomal protein uS12 methylthiotransferase RimO from Saccharopolyspora erythraea (strain ATCC 11635 / DSM 40517 / JCM 4748 / NBRC 13426 / NCIMB 8594 / NRRL 2338).